The following is a 287-amino-acid chain: Transmembrane protein 163 (287 aa).

A disordered region spans residues 1–63; it reads METAAGSERR…ESGQFSDGLE (63 aa). Topologically, residues 1–86 are cytoplasmic; it reads METAAGSERR…HEAQNYRKKA (86 aa). 4 positions are modified to phosphoserine: serine 11, serine 53, serine 55, and serine 59. The segment at 40-70 is required for interaction with MCOLN1; the sequence is EPPQPEEERQLRISESGQFSDGLEDRGLLES. Residues 87–107 form a helical membrane-spanning segment; sequence LWVSWFSIIVTLALAVAAFTV. Residues 108 to 114 are Extracellular-facing; the sequence is SVMRYSA. Residues 115–135 form a helical membrane-spanning segment; the sequence is SAFGFAFDAILDVLSSAIVLW. The Cytoplasmic portion of the chain corresponds to 136–148; the sequence is RYSNAAAVHSAHR. Residues 149–169 form a helical membrane-spanning segment; the sequence is EYIACVILGVIFLLSSVCIVV. Residues 170–185 are Extracellular-facing; the sequence is KAIHDLSTKLLPEVDD. Residues 186-206 traverse the membrane as a helical segment; sequence FLFSVSILSGILCSILAVLKF. Over 207-215 the chain is Cytoplasmic; it reads MLGKVLTSR. The helical transmembrane segment at 216–236 threads the bilayer; sequence ALITDGFNSLVGGVMGFSILL. At 237–253 the chain is on the extracellular side; it reads SAEVFKHNSAVWYLDGS. The helical transmembrane segment at 254–274 threads the bilayer; sequence IGVLIGLTIFAYGVKLLIDMV. At 275–287 the chain is on the cytoplasmic side; sequence PRVRQTRHYEMFE.

Belongs to the TMEM163 family. As to quaternary structure, homodimer. Interacts with MCOLN1/TRPML1. Interacts with SLC30A1, SLC30A2, SLC30A3 and SLC30A4.

It is found in the cytoplasmic vesicle. The protein resides in the secretory vesicle. The protein localises to the synaptic vesicle membrane. Its subcellular location is the early endosome membrane. It localises to the late endosome membrane. It is found in the lysosome membrane. The protein resides in the cell membrane. It carries out the reaction Zn(2+)(in) = Zn(2+)(out). In terms of biological role, zinc ion transporter that mediates zinc efflux and plays a crucial role in intracellular zinc homeostasis. Binds the divalent cations Zn(2+), Ni(2+), and to a minor extent Cu(2+). Is a functional modulator of P2X purinoceptors, including P2RX1, P2RX3, P2RX4 and P2RX7. Plays a role in central nervous system development and is required for myelination, and survival and proliferation of oligodendrocytes. The protein is Transmembrane protein 163 (TMEM163) of Bos taurus (Bovine).